Reading from the N-terminus, the 66-residue chain is Clarkitoxin-I-Mdum (66 aa).

Disulfide bonds link cysteine 3/cysteine 24, cysteine 17/cysteine 42, cysteine 46/cysteine 59, and cysteine 60/cysteine 65.

Expressed by the venom gland.

The protein resides in the secreted. Functionally, no toxicity is observed upon intravenous or intracerebroventricular injection into mice. Has no cytotoxic activity towards C2C12 cells at 100 ug/ml. This Micrurus dumerilii (Coral snake) protein is Clarkitoxin-I-Mdum.